The sequence spans 178 residues: Caveolin-1 (178 aa).

Serine 2 bears the N-acetylserine mark. Serine 2 carries the post-translational modification Phosphoserine. The required for homooligomerization stretch occupies residues 2-94; sequence SGGKYVDSEG…WKASFTTFTV (93 aa). The Cytoplasmic portion of the chain corresponds to 2 to 104; sequence SGGKYVDSEG…TKYWFYRLLS (103 aa). Residue lysine 5 is modified to N6-acetyllysine; alternate. Lysine 5 participates in a covalent cross-link: Glycyl lysine isopeptide (Lys-Gly) (interchain with G-Cter in ubiquitin); alternate. Tyrosine 6 is subject to Phosphotyrosine. A Phosphoserine modification is found at serine 9. A Phosphotyrosine; by ABL1 modification is found at tyrosine 14. At tyrosine 25 the chain carries Phosphotyrosine. Glycyl lysine isopeptide (Lys-Gly) (interchain with G-Cter in ubiquitin) cross-links involve residues lysine 26, lysine 30, lysine 39, lysine 47, and lysine 57. An interaction with CAVIN3 region spans residues 82–94; sequence DGIWKASFTTFTV. Residues 105-125 constitute an intramembrane region (helical); the sequence is ALFGIPMALIWGIYFAILSFL. Residues 126 to 178 lie on the Cytoplasmic side of the membrane; sequence HIWAVVPCIKSFLIEIQCISRVYSIYVHTFCDPFFEAVGKIFSNIRINMQKEI. Positions 131–142 are interacts with SPRY1, SPRY2, SPRY3 and SPRY4; the sequence is VPCIKSFLIEIQ. S-palmitoyl cysteine attachment occurs at residues cysteine 133, cysteine 143, and cysteine 156. Residues 149–160 are interacts with SPRY1, SPRY2, and SPRY4; that stretch reads SIYVHTFCDPFF. The segment at 167 to 178 is interacts with SPRY1, SPRY2, SPRY3 and SPRY4; it reads FSNIRINMQKEI.

This sequence belongs to the caveolin family. Homooligomer. Interacts with GLIPR2. Interacts with NOSTRIN. Interacts with SNAP25 and STX1A. Interacts (via the N-terminus) with DPP4; the interaction is direct. Interacts with CTNNB1, CDH1 and JUP. Interacts with PACSIN2; this interaction induces membrane tubulation. Interacts with SLC7A9. Interacts with BMX and BTK. Interacts with TGFBR1. Interacts with CAVIN3 (via leucine-zipper domain) in a cholesterol-sensitive manner. Interacts with CAVIN1. Interacts with EHD2 in a cholesterol-dependent manner. Forms a ternary complex with UBXN6 and VCP; mediates CAV1 targeting to lysosomes for degradation. Interacts with ABCG1; this interaction regulates ABCG1-mediated cholesterol efflux. Interacts with NEU3; this interaction enhances NEU3 sialidase activity within caveola. Interacts (via C-terminus) with SPRY1, SPRY2 (via C-terminus), SPRY3, and SPRY4. Interacts with IGFBP5; this interaction allows trafficking of IGFBP5 from the plasma membrane to the nucleus. In terms of processing, phosphorylated at Tyr-14 by ABL1 in response to oxidative stress. Ubiquitinated. Undergo monoubiquitination and multi- and/or polyubiquitination. Monoubiquitination of N-terminal lysines promotes integration in a ternary complex with UBXN6 and VCP which promotes oligomeric CAV1 targeting to lysosomes for degradation. Ubiquitinated by ZNRF1; leading to degradation and modulation of the TLR4-mediated immune response.

Its subcellular location is the golgi apparatus membrane. It is found in the cell membrane. The protein localises to the membrane. It localises to the caveola. The protein resides in the membrane raft. Its function is as follows. May act as a scaffolding protein within caveolar membranes. Forms a stable heterooligomeric complex with CAV2 that targets to lipid rafts and drives caveolae formation. Mediates the recruitment of CAVIN proteins (CAVIN1/2/3/4) to the caveolae. Interacts directly with G-protein alpha subunits and can functionally regulate their activity. Involved in the costimulatory signal essential for T-cell receptor (TCR)-mediated T-cell activation. Its binding to DPP4 induces T-cell proliferation and NF-kappa-B activation in a T-cell receptor/CD3-dependent manner. Recruits CTNNB1 to caveolar membranes and may regulate CTNNB1-mediated signaling through the Wnt pathway. Negatively regulates TGFB1-mediated activation of SMAD2/3 by mediating the internalization of TGFBR1 from membrane rafts leading to its subsequent degradation. Binds 20(S)-hydroxycholesterol (20(S)-OHC). The polypeptide is Caveolin-1 (CAV1) (Felis catus (Cat)).